Here is a 268-residue protein sequence, read N- to C-terminus: Microtubule-associated protein RP/EB family member 1 (268 aa).

Ala2 carries the post-translational modification N-acetylalanine. The Calponin-homology (CH) domain maps to 14 to 116 (NLSRHDMLAW…FVQWFKKFFD (103 aa)). Lys66 is subject to N6-crotonyllysine. Tyr124 bears the Phosphotyrosine mark. Positions 124–268 (YDPVAARQGQ…GGPQEEQEEY (145 aa)) are interaction with MTUS2/TIP150. A compositionally biased stretch (low complexity) spans 146 to 160 (LNKPKKPLSSSSAAP). The interval 146 to 191 (LNKPKKPLSSSSAAPQRPISTQRTAAAPKAGPGVVRKNPGVGNGDD) is disordered. Ser155 and Ser165 each carry phosphoserine. An EB1 C-terminal domain is found at 185 to 255 (GVGNGDDEAA…LYATDEGFVI (71 aa)). The tract at residues 185-268 (GVGNGDDEAA…GGPQEEQEEY (84 aa)) is interaction with CDK5RAP2. The tract at residues 206–211 (TVEDLE) is interaction with APC. The segment at 208-268 (EDLEKERDFY…GGPQEEQEEY (61 aa)) is DCTN1-binding. N6-acetyllysine is present on Lys220. The APC-binding stretch occupies residues 220–242 (KLRNIELICQENEGENDPVLQRI). The segment at 232–255 (EGENDPVLQRIVDILYATDEGFVI) is interaction with SKA1.

This sequence belongs to the MAPRE family. Homodimer. Heterodimer with MAPRE3. Interacts with DCTN1, DCTN2, TERF1 and dynein intermediate chain. Interaction with DIAPH1 and DIAPH2. Interacts (via C-terminal residues 206-211) with APC (via C-terminal residues 2674-2845); the interaction inhibits association with and bundling of F-actin. Interacts with CLASP2, DST, KIF2C and STIM1; probably required for their targeting to the growing microtubule plus ends. Interacts with MTUS2; interaction is direct and probably targets MTUS2 to microtubules. Interacts (via C-terminus) with SKA1 (via SXIP motif); the interaction is direct and stabilizes the kinetochore-microtubule attachment of the SKA1 complex. Interacts with APC2. Interacts with CLASP1. Interacts with CDK5RAP2. Interacts with MACF1. Interacts with RABL2/RABL2A; binds preferentially to GTP-bound RABL2. Interacts with KCNAB2. Interacts (via C-terminus) with CLIP1. Interacts with SLAIN2 and SLAIN1. Interacts with KIF18B; this interaction is required for efficient accumulation of KIF18B at microtubule plus ends. Interacts with MISP. Interacts with KNSTRN. Interacts with NCKAP5L. Interacts with CAMSAP2. Interacts with PDE4DIP isoform 13/MMG8/SMYLE; this interaction is required for its recruitment to the Golgi apparatus. Forms a pericentrosomal complex with AKAP9, CDK5RAP2 and PDE4DIP isoform 13/MMG8/SMYLE; within this complex, MAPRE1 binding to CDK5RAP2 may be mediated by PDE4DIP. Interacts with AKNA. Interacts with GAS2L1, GAS2L2, and GAS2L3. Interacts with RARRES1 and AGBL2. Acetylation at Lys-220 by KAT2B/PCAF promotes dynamic kinetochore-microtubule interactions in early mitosis. Post-translationally, crotonylated by KAT5 during mitosis, promoting astral microtubule plasticity and dynamic connection between astral microtubules and the cortex during mitotic chromosome segregation, thereby ensuring accurate spindle positioning in mitosis. Decrotonylated by HDAC3.

The protein localises to the cytoplasm. Its subcellular location is the cytoskeleton. The protein resides in the microtubule organizing center. It localises to the centrosome. It is found in the golgi apparatus. The protein localises to the spindle. Its subcellular location is the spindle pole. In terms of biological role, plus-end tracking protein (+TIP) that binds to the plus-end of microtubules and regulates the dynamics of the microtubule cytoskeleton. Recruits other +TIP proteins to microtubules by binding to a conserved Ser-X-Leu-Pro (SXLP) motif in their polypeptide chains. Promotes cytoplasmic microtubule nucleation and elongation. Involved in mitotic spindle positioning by stabilizing microtubules and promoting dynamic connection between astral microtubules and the cortex during mitotic chromosome segregation. Assists chromosome alignment in metaphase by recruiting the SKA complex to the spindle and stabilizing its interactions with microtubule bundles (K-fibers). Also acts as a regulator of minus-end microtubule organization: interacts with the complex formed by AKAP9 and PDE4DIP, leading to recruit CAMSAP2 to the Golgi apparatus, thereby tethering non-centrosomal minus-end microtubules to the Golgi, an important step for polarized cell movement. Promotes elongation of CAMSAP2-decorated microtubule stretches on the minus-end of microtubules. Acts as a regulator of autophagosome transport via interaction with CAMSAP2. Functions downstream of Rho GTPases and DIAPH1 in stable microtubule formation. May play a role in cell migration. In Pongo abelii (Sumatran orangutan), this protein is Microtubule-associated protein RP/EB family member 1 (MAPRE1).